The primary structure comprises 318 residues: L-lactate dehydrogenase (318 aa).

The NAD(+) site is built by valine 14, aspartate 35, lysine 40, and tyrosine 66. Substrate is bound by residues arginine 89 and 121 to 124; that span reads NPVD. Position 144 (serine 144) interacts with NAD(+). 149–152 contributes to the substrate binding site; the sequence is DTAR. The active-site Proton acceptor is histidine 176. Tyrosine 220 is subject to Phosphotyrosine. Threonine 229 contributes to the substrate binding site.

This sequence belongs to the LDH/MDH superfamily. LDH family. Homotetramer.

The protein localises to the cytoplasm. The enzyme catalyses (S)-lactate + NAD(+) = pyruvate + NADH + H(+). It functions in the pathway fermentation; pyruvate fermentation to lactate; (S)-lactate from pyruvate: step 1/1. In terms of biological role, catalyzes the conversion of lactate to pyruvate. The polypeptide is L-lactate dehydrogenase (Staphylococcus haemolyticus (strain JCSC1435)).